The chain runs to 417 residues: UDP-N-acetylmuramoylalanine--D-glutamate ligase (417 aa).

101–107 serves as a coordination point for ATP; that stretch reads GTAGKTS.

It belongs to the MurCDEF family.

Its subcellular location is the cytoplasm. It carries out the reaction UDP-N-acetyl-alpha-D-muramoyl-L-alanine + D-glutamate + ATP = UDP-N-acetyl-alpha-D-muramoyl-L-alanyl-D-glutamate + ADP + phosphate + H(+). It functions in the pathway cell wall biogenesis; peptidoglycan biosynthesis. In terms of biological role, cell wall formation. Catalyzes the addition of glutamate to the nucleotide precursor UDP-N-acetylmuramoyl-L-alanine (UMA). In Thermus thermophilus (strain ATCC BAA-163 / DSM 7039 / HB27), this protein is UDP-N-acetylmuramoylalanine--D-glutamate ligase.